A 154-amino-acid chain; its full sequence is Jupiter microtubule associated homolog 1 (154 aa).

Met-1 bears the N-acetylmethionine mark. The segment covering 1–19 has biased composition (polar residues); that stretch reads MTTTTTFKGVDPNSRNSSR. The interval 1–154 is disordered; that stretch reads MTTTTTFKGV…PGGKSSLVLG (154 aa). Thr-2 carries the post-translational modification N-acetylthreonine; in Hematological and neurological expressed 1 protein, N-terminally processed. 2 positions are modified to phosphoserine: Ser-28 and Ser-31. Thr-54 is subject to Phosphothreonine. Phosphoserine occurs at positions 71, 80, 87, 88, and 92. Over residues 80 to 91 the composition is skewed to polar residues; that stretch reads SGPQRRNSSEAN. Over residues 96–108 the composition is skewed to basic and acidic residues; sequence LDLKGEGDVHENV. Residues 125–138 are compositionally biased toward pro residues; sequence PAAPVPSPVAPAPV. The residue at position 131 (Ser-131) is a Phosphoserine. Residue Lys-148 is modified to N6-acetyllysine.

The protein belongs to the JUPITER family. In terms of assembly, interacts with the complex composed, at least, of APC, CTNNB1 and GSK3B; the interaction takes place with the inactive form of GSK3B (phosphorylated at 'Ser-9').

Its subcellular location is the nucleus. The protein resides in the cytoplasm. Its function is as follows. Modulates negatively AKT-mediated GSK3B signaling. Induces CTNNB1 'Ser-33' phosphorylation and degradation through the suppression of the inhibitory 'Ser-9' phosphorylation of GSK3B, which represses the function of the APC:CTNNB1:GSK3B complex and the interaction with CDH1/E-cadherin in adherent junctions. Plays a role in the regulation of cell cycle and cell adhesion. Has an inhibitory role on AR-signaling pathway through the induction of receptor proteasomal degradation. The chain is Jupiter microtubule associated homolog 1 from Bos taurus (Bovine).